We begin with the raw amino-acid sequence, 288 residues long: Solute carrier family 25 member 47-B (288 aa).

Solcar repeat units lie at residues 1–83, 99–191, and 199–286; these read MHLA…ILQF, AHIF…ICEI, and PGWP…VVRL. Helical transmembrane passes span 3–23, 58–75, 101–121, 175–195, 199–219, and 257–277; these read LADF…GYPL, GMSM…LVFG, IFLA…PADI, GPSF…LTTE, PGWP…WAVG, and VLFR…MSVF.

It belongs to the mitochondrial carrier (TC 2.A.29) family.

It localises to the mitochondrion inner membrane. The protein is Solute carrier family 25 member 47-B (slc25a47b) of Danio rerio (Zebrafish).